The chain runs to 114 residues: Large ribosomal subunit protein bL21c (114 aa).

Belongs to the bacterial ribosomal protein bL21 family. In terms of assembly, part of the 50S ribosomal subunit.

The protein resides in the plastid. It localises to the chloroplast. In terms of biological role, this protein binds to 23S rRNA. In Staurastrum punctulatum (Green alga), this protein is Large ribosomal subunit protein bL21c.